The following is a 218-amino-acid chain: Ubiquitin-conjugating enzyme E2-24 kDa (218 aa).

Residues 3 to 148 (SSKRRIETDV…IKEYIDKYAT (146 aa)) form the UBC core domain. Cys-85 acts as the Glycyl thioester intermediate in catalysis. Residues 154–218 (QMFGGDNDSD…DDDYDEVANQ (65 aa)) are disordered. Composition is skewed to acidic residues over residues 160–183 (NDSDDSDSGGDLQEEDSDSDEDMD) and 192–218 (DSVDELSEDLSDIDVSDDDDYDEVANQ).

This sequence belongs to the ubiquitin-conjugating enzyme family.

It localises to the cytoplasm. It carries out the reaction S-ubiquitinyl-[E1 ubiquitin-activating enzyme]-L-cysteine + [E2 ubiquitin-conjugating enzyme]-L-cysteine = [E1 ubiquitin-activating enzyme]-L-cysteine + S-ubiquitinyl-[E2 ubiquitin-conjugating enzyme]-L-cysteine.. Its pathway is protein modification; protein ubiquitination. In terms of biological role, catalyzes the covalent attachment of ubiquitin to other proteins. Required for the adaptation to the presence of glucose in the growth medium; mediates the degradation of enzymes involved in gluconeogenesis when cells are shifted to glucose-containing medium. Required for proteasome-dependent catabolite degradation of fructose-1,6-bisphosphatase (FBP1). This is Ubiquitin-conjugating enzyme E2-24 kDa (UBC8) from Saccharomyces cerevisiae (strain ATCC 204508 / S288c) (Baker's yeast).